The primary structure comprises 74 residues: Large ribosomal subunit protein uL30 (74 aa).

Belongs to the universal ribosomal protein uL30 family. As to quaternary structure, part of the 50S ribosomal subunit.

In Micrococcus luteus (strain ATCC 4698 / DSM 20030 / JCM 1464 / CCM 169 / CCUG 5858 / IAM 1056 / NBRC 3333 / NCIMB 9278 / NCTC 2665 / VKM Ac-2230) (Micrococcus lysodeikticus), this protein is Large ribosomal subunit protein uL30.